A 46-amino-acid chain; its full sequence is uncharacterized protein (46 aa).

It localises to the mitochondrion. This is an uncharacterized protein from Saccharomyces cerevisiae (strain ATCC 204508 / S288c) (Baker's yeast).